The sequence spans 389 residues: S-adenosylmethionine synthase (389 aa).

His15 contacts ATP. Mg(2+) is bound at residue Asp17. Position 43 (Glu43) interacts with K(+). L-methionine-binding residues include Glu56 and Gln99. The interval 99-109 is flexible loop; the sequence is QSPDIAQGVNE. Residues 166 to 168, 234 to 235, Asp243, 249 to 250, Ala266, and Lys270 each bind ATP; these read DAK, RF, and RK. Residue Asp243 coordinates L-methionine. Residue Lys274 coordinates L-methionine.

Belongs to the AdoMet synthase family. In terms of assembly, homotetramer; dimer of dimers. It depends on Mg(2+) as a cofactor. The cofactor is K(+).

Its subcellular location is the cytoplasm. It catalyses the reaction L-methionine + ATP + H2O = S-adenosyl-L-methionine + phosphate + diphosphate. Its pathway is amino-acid biosynthesis; S-adenosyl-L-methionine biosynthesis; S-adenosyl-L-methionine from L-methionine: step 1/1. In terms of biological role, catalyzes the formation of S-adenosylmethionine (AdoMet) from methionine and ATP. The overall synthetic reaction is composed of two sequential steps, AdoMet formation and the subsequent tripolyphosphate hydrolysis which occurs prior to release of AdoMet from the enzyme. The polypeptide is S-adenosylmethionine synthase (Neisseria meningitidis serogroup C (strain 053442)).